We begin with the raw amino-acid sequence, 461 residues long: Argininosuccinate lyase (461 aa).

It belongs to the lyase 1 family. Argininosuccinate lyase subfamily.

The protein resides in the cytoplasm. It carries out the reaction 2-(N(omega)-L-arginino)succinate = fumarate + L-arginine. It functions in the pathway amino-acid biosynthesis; L-arginine biosynthesis; L-arginine from L-ornithine and carbamoyl phosphate: step 3/3. The protein is Argininosuccinate lyase of Dehalococcoides mccartyi (strain CBDB1).